Here is a 432-residue protein sequence, read N- to C-terminus: Adenosylhomocysteinase (432 aa).

A disordered region spans residues 1 to 24; the sequence is MSAYSPLSAQLDADTDVDVESTRT. Residues D137 and E162 each coordinate substrate. Residue 163-165 coordinates NAD(+); sequence TTT. Substrate contacts are provided by K192 and D196. NAD(+) contacts are provided by residues N197, 226-231, E249, N284, 305-307, and N352; these read GYGYCG and AGH.

This sequence belongs to the adenosylhomocysteinase family. The cofactor is NAD(+).

The protein resides in the cytoplasm. The enzyme catalyses S-adenosyl-L-homocysteine + H2O = L-homocysteine + adenosine. It participates in amino-acid biosynthesis; L-homocysteine biosynthesis; L-homocysteine from S-adenosyl-L-homocysteine: step 1/1. May play a key role in the regulation of the intracellular concentration of adenosylhomocysteine. In Haloquadratum walsbyi (strain DSM 16790 / HBSQ001), this protein is Adenosylhomocysteinase.